We begin with the raw amino-acid sequence, 118 residues long: Immunoglobulin heavy variable 4-31 (118 aa).

A signal peptide spans 1 to 19; the sequence is MKHLWFFLLLVAAPRWVLS. Residues 20 to 44 are framework-1; the sequence is QVQLQESGPGLVKPSQTLSLTCTVS. In terms of domain architecture, Ig-like spans 20–118; that stretch reads QVQLQESGPG…ADTAVYYCAR (99 aa). Cysteines 41 and 116 form a disulfide. Residues 45 to 54 form a complementarity-determining-1 region; it reads GGSISSGGYY. The tract at residues 55 to 71 is framework-2; it reads WSWIRQHPGKGLEWIGY. The segment at 72–78 is complementarity-determining-2; it reads IYYSGST. Residues 79-116 are framework-3; the sequence is YYNPSLKSLVTISVDTSKNQFSLKLSSVTAADTAVYYC. Positions 117–118 are complementarity-determining-3; the sequence is AR.

Immunoglobulins are composed of two identical heavy chains and two identical light chains; disulfide-linked.

It is found in the secreted. It localises to the cell membrane. Functionally, v region of the variable domain of immunoglobulin heavy chains that participates in the antigen recognition. Immunoglobulins, also known as antibodies, are membrane-bound or secreted glycoproteins produced by B lymphocytes. In the recognition phase of humoral immunity, the membrane-bound immunoglobulins serve as receptors which, upon binding of a specific antigen, trigger the clonal expansion and differentiation of B lymphocytes into immunoglobulins-secreting plasma cells. Secreted immunoglobulins mediate the effector phase of humoral immunity, which results in the elimination of bound antigens. The antigen binding site is formed by the variable domain of one heavy chain, together with that of its associated light chain. Thus, each immunoglobulin has two antigen binding sites with remarkable affinity for a particular antigen. The variable domains are assembled by a process called V-(D)-J rearrangement and can then be subjected to somatic hypermutations which, after exposure to antigen and selection, allow affinity maturation for a particular antigen. This chain is Immunoglobulin heavy variable 4-31, found in Homo sapiens (Human).